Consider the following 361-residue polypeptide: Allatostatin-A receptor (361 aa).

The Extracellular portion of the chain corresponds to 1–46 (MESTEDEFYTICLNLTAEDPSFGNCNYTTDFENGELLEKVVSRVVP). 2 N-linked (GlcNAc...) asparagine glycosylation sites follow: Asn-14 and Asn-26. Residues 47–67 (IFFGFIGIVGLVGNALVVLVV) form a helical membrane-spanning segment. Residues 68–78 (AANPGMRSTTN) are Cytoplasmic-facing. Residues 79 to 99 (LLIINLAVADLLFVIFCVPFT) traverse the membrane as a helical segment. Over 100 to 116 (ATDYVMPRWPFGDWWCK) the chain is Extracellular. A disulfide bond links Cys-115 and Cys-196. The helical transmembrane segment at 117–137 (VVQYFIVVTAHASVYTLVLMS) threads the bilayer. Over 138 to 158 (LDRFMAVVHPIASMSIRTEKN) the chain is Cytoplasmic. Residues 159–179 (ALLAIACIWVVILTTAIPVGI) traverse the membrane as a helical segment. The Extracellular segment spans residues 180 to 212 (CHGEREYSYFNRNHSSCVFLEERGYSKLGFQMS). Asn-192 carries an N-linked (GlcNAc...) asparagine glycan. The helical transmembrane segment at 213-233 (FFLSSYVIPLALISVLYMCML) threads the bilayer. Topologically, residues 234 to 259 (TRLWKSAPGGRVSAESRRGRKKVTRM) are cytoplasmic. Residues 260–280 (VVVVVVVFAVCWCPIQIILLV) form a helical membrane-spanning segment. At 281-296 (KALNKYHITYFTVTAQ) the chain is on the extracellular side. The chain crosses the membrane as a helical span at residues 297–317 (IVSHVLAYMNSCVNPVLYAFL). Over 318–361 (SENFRVAFRKVMYCPPPYNDGFSGRPQATKTTRTGNGNSCHDIV) the chain is Cytoplasmic. Positions 341 to 361 (GRPQATKTTRTGNGNSCHDIV) are disordered. Positions 343–361 (PQATKTTRTGNGNSCHDIV) are enriched in polar residues.

The protein belongs to the G-protein coupled receptor 1 family. Expressed in the midgut and, to a lesser extent, in the fore- and hindgut of fifth instar larvae. Also highly expressed in the brain of fourth and fifth instar larvae.

The protein localises to the cell membrane. Acts as a receptor for A-type allatostatin neuropeptide hormones. This chain is Allatostatin-A receptor, found in Bombyx mori (Silk moth).